The primary structure comprises 147 residues: Phospholipase A2 SSD387 (147 aa).

The signal sequence occupies residues 1–19; sequence MSPKFLLFSIIAVWSCAAA. Residues 20–28 constitute a propeptide that is removed on maturation; that stretch reads IEALFIQPR. 5 disulfides stabilise this stretch: Cys-55/Cys-71, Cys-70/Cys-130, Cys-77/Cys-123, Cys-86/Cys-116, and Cys-109/Cys-121. Ca(2+) is bound by residues Gly-56 and Gly-58. His-74 is a catalytic residue. Position 75 (Asp-75) interacts with Ca(2+). The active site involves Asp-124.

It depends on Ca(2+) as a cofactor. As to expression, expressed by the venom gland.

Its subcellular location is the secreted. The enzyme catalyses a 1,2-diacyl-sn-glycero-3-phosphocholine + H2O = a 1-acyl-sn-glycero-3-phosphocholine + a fatty acid + H(+). Its function is as follows. PLA2 catalyzes the calcium-dependent hydrolysis of the 2-acyl groups in 3-sn-phosphoglycerides. This is Phospholipase A2 SSD387 from Scolopendra dehaani (Thai centipede).